The following is a 476-amino-acid chain: CDK5 and ABL1 enzyme substrate 2 (476 aa).

Residues 1-119 form a disordered region; that stretch reads MAAAAAGGAP…GLGLDGQRQR (119 aa). The span at 30 to 40 shows a compositional bias: basic residues; that stretch reads PRRRGDSRRRQ. Pro residues predominate over residues 65–96; it reads PAPPPPPPTEAREAPAPPPAPPGGLPGLPARP. A phosphoserine mark is found at Ser128 and Ser206. The disordered stretch occupies residues 256-295; that stretch reads DSHGLLPQPRPSIPRAPPGSRHKPVPTKSTPAGTELGSDG. Pro residues predominate over residues 263–272; that stretch reads QPRPSIPRAP.

This sequence belongs to the cyclin family. In terms of assembly, binds to CDK3, CDK5 and ABL1. The C-terminal cyclin-box-like region binds to CDK5. In terms of tissue distribution, widely expressed.

Functionally, unknown. Probably involved in G1-S cell cycle transition. The sequence is that of CDK5 and ABL1 enzyme substrate 2 (Cables2) from Mus musculus (Mouse).